A 90-amino-acid polypeptide reads, in one-letter code: Co-chaperonin GroES (90 aa).

It belongs to the GroES chaperonin family. In terms of assembly, heptamer of 7 subunits arranged in a ring. Interacts with the chaperonin GroEL.

Its subcellular location is the cytoplasm. Functionally, together with the chaperonin GroEL, plays an essential role in assisting protein folding. The GroEL-GroES system forms a nano-cage that allows encapsulation of the non-native substrate proteins and provides a physical environment optimized to promote and accelerate protein folding. GroES binds to the apical surface of the GroEL ring, thereby capping the opening of the GroEL channel. In Helicobacter hepaticus (strain ATCC 51449 / 3B1), this protein is Co-chaperonin GroES.